A 196-amino-acid polypeptide reads, in one-letter code: Molybdenum cofactor guanylyltransferase (196 aa).

GTP contacts are provided by residues 10-12, lysine 23, asparagine 51, aspartate 69, and aspartate 99; that span reads LAG. Residue aspartate 99 coordinates Mg(2+).

The protein belongs to the MobA family. Monomer. It depends on Mg(2+) as a cofactor.

It localises to the cytoplasm. The enzyme catalyses Mo-molybdopterin + GTP + H(+) = Mo-molybdopterin guanine dinucleotide + diphosphate. Its function is as follows. Transfers a GMP moiety from GTP to Mo-molybdopterin (Mo-MPT) cofactor (Moco or molybdenum cofactor) to form Mo-molybdopterin guanine dinucleotide (Mo-MGD) cofactor. This is Molybdenum cofactor guanylyltransferase from Shewanella baltica (strain OS185).